Reading from the N-terminus, the 226-residue chain is Ribonuclease 3 (226 aa).

The region spanning 5–127 (LERLQRALGY…IIGAIYLDAG (123 aa)) is the RNase III domain. Glu-40 is a binding site for Mg(2+). The active site involves Asp-44. Residues Asp-113 and Glu-116 each contribute to the Mg(2+) site. The active site involves Glu-116. The DRBM domain occupies 154–224 (DSKTRLQEYL…AKQALLALGV (71 aa)).

Belongs to the ribonuclease III family. In terms of assembly, homodimer. The cofactor is Mg(2+).

Its subcellular location is the cytoplasm. It catalyses the reaction Endonucleolytic cleavage to 5'-phosphomonoester.. Its function is as follows. Digests double-stranded RNA. Involved in the processing of primary rRNA transcript to yield the immediate precursors to the large and small rRNAs (23S and 16S). Processes some mRNAs, and tRNAs when they are encoded in the rRNA operon. Processes pre-crRNA and tracrRNA of type II CRISPR loci if present in the organism. This chain is Ribonuclease 3, found in Hahella chejuensis (strain KCTC 2396).